Reading from the N-terminus, the 426-residue chain is Enolase 2 (426 aa).

Position 163 (Gln-163) interacts with (2R)-2-phosphoglycerate. The active-site Proton donor is Glu-205. 3 residues coordinate Mg(2+): Asp-242, Glu-285, and Asp-312. Residues Lys-337, Arg-366, Ser-367, and Lys-388 each coordinate (2R)-2-phosphoglycerate. Residue Lys-337 is the Proton acceptor of the active site.

It belongs to the enolase family. It depends on Mg(2+) as a cofactor.

The protein localises to the cytoplasm. It is found in the secreted. The protein resides in the cell surface. It carries out the reaction (2R)-2-phosphoglycerate = phosphoenolpyruvate + H2O. Its pathway is carbohydrate degradation; glycolysis; pyruvate from D-glyceraldehyde 3-phosphate: step 4/5. Functionally, catalyzes the reversible conversion of 2-phosphoglycerate (2-PG) into phosphoenolpyruvate (PEP). It is essential for the degradation of carbohydrates via glycolysis. The polypeptide is Enolase 2 (Methanospirillum hungatei JF-1 (strain ATCC 27890 / DSM 864 / NBRC 100397 / JF-1)).